A 184-amino-acid chain; its full sequence is Dynactin subunit 6 (184 aa).

It belongs to the dynactin subunits 5/6 family. Dynactin subunit 6 subfamily. Subunit of dynactin, a multiprotein complex part of a tripartite complex with dynein and a adapter, such as BICDL1, BICD2 or HOOK3. The dynactin complex is built around ACTR1A/ACTB filament and consists of an actin-related filament composed of a shoulder domain, a pointed end and a barbed end.

It is found in the cytoplasm. The protein resides in the cytoskeleton. Functionally, part of the dynactin complex that activates the molecular motor dynein for ultra-processive transport along microtubules. The sequence is that of Dynactin subunit 6 (dctn6) from Nematostella vectensis (Starlet sea anemone).